We begin with the raw amino-acid sequence, 492 residues long: Glutamyl-tRNA(Gln) amidotransferase subunit B, mitochondrial (492 aa).

It belongs to the GatB/GatE family. GatB subfamily. In terms of assembly, subunit of the heterotrimeric GatFAB amidotransferase (AdT) complex, composed of A, B and F subunits.

The protein localises to the mitochondrion. It catalyses the reaction L-glutamyl-tRNA(Gln) + L-glutamine + ATP + H2O = L-glutaminyl-tRNA(Gln) + L-glutamate + ADP + phosphate + H(+). Functionally, allows the formation of correctly charged Gln-tRNA(Gln) through the transamidation of misacylated Glu-tRNA(Gln) in the mitochondria. The reaction takes place in the presence of glutamine and ATP through an activated gamma-phospho-Glu-tRNA(Gln). The chain is Glutamyl-tRNA(Gln) amidotransferase subunit B, mitochondrial from Komagataella phaffii (strain GS115 / ATCC 20864) (Yeast).